The primary structure comprises 483 residues: Altronate oxidoreductase (483 aa).

18-29 is an NAD(+) binding site; sequence IIQFGEGNFLRA.

Belongs to the mannitol dehydrogenase family. UxaB subfamily.

It carries out the reaction D-altronate + NAD(+) = keto-D-tagaturonate + NADH + H(+). It participates in carbohydrate metabolism; pentose and glucuronate interconversion. The protein is Altronate oxidoreductase of Yersinia enterocolitica serotype O:8 / biotype 1B (strain NCTC 13174 / 8081).